A 101-amino-acid chain; its full sequence is UPF0358 protein EF_2458 (101 aa).

This sequence belongs to the UPF0358 family.

The sequence is that of UPF0358 protein EF_2458 from Enterococcus faecalis (strain ATCC 700802 / V583).